The sequence spans 77 residues: Small ribosomal subunit protein bS16c (77 aa).

It belongs to the bacterial ribosomal protein bS16 family.

Its subcellular location is the plastid. The protein resides in the cyanelle. The sequence is that of Small ribosomal subunit protein bS16c from Cyanophora paradoxa.